Here is a 256-residue protein sequence, read N- to C-terminus: Small ribosomal subunit protein uS2 (256 aa).

It belongs to the universal ribosomal protein uS2 family.

The polypeptide is Small ribosomal subunit protein uS2 (Brucella anthropi (strain ATCC 49188 / DSM 6882 / CCUG 24695 / JCM 21032 / LMG 3331 / NBRC 15819 / NCTC 12168 / Alc 37) (Ochrobactrum anthropi)).